Here is a 145-residue protein sequence, read N- to C-terminus: Large ribosomal subunit protein uL13 (145 aa).

This sequence belongs to the universal ribosomal protein uL13 family. Part of the 50S ribosomal subunit.

Functionally, this protein is one of the early assembly proteins of the 50S ribosomal subunit, although it is not seen to bind rRNA by itself. It is important during the early stages of 50S assembly. In Macrococcus caseolyticus (strain JCSC5402) (Macrococcoides caseolyticum), this protein is Large ribosomal subunit protein uL13.